A 196-amino-acid polypeptide reads, in one-letter code: MSFVVIITGIPGVGKSTITRLALQRTKAKFKLINFGDLMFEEAVKAGLVNHRDEMRKLPLEIQRDLQMKVAKKISEMARQQPILLDTHATIKTPHGYLLGLPYEVIKTLNPNFIVIIEATPSEILGRRLRDLKRDRDVETEEQIQRHQDLNRAAAIAYAMHSNALIKIIENHEDKGLEEAVNELVEILDLAVKEYA.

Residue 9-17 (GIPGVGKST) participates in ATP binding.

The protein belongs to the archaeal adenylate kinase family.

The protein resides in the cytoplasm. The catalysed reaction is AMP + ATP = 2 ADP. This chain is Adenylate kinase (adkA), found in Pyrococcus abyssi (strain GE5 / Orsay).